A 1193-amino-acid polypeptide reads, in one-letter code: Probable cation-transporting ATPase 13A4 (1193 aa).

Residues 1–32 (MGDHLEKSQHALLNEGDENEMEIFGYRTQGCR) lie on the Cytoplasmic side of the membrane. Residues 33–53 (KALCLIGSIFSLGMLPLVFYW) lie within the membrane without spanning it. The Cytoplasmic segment spans residues 54 to 198 (RPAWRVWANC…DVEITPIWKL (145 aa)). Residues 199–219 (LIKEVLNPFYIFQLFSVCLWF) form a helical membrane-spanning segment. Over 220-224 (SEDYK) the chain is Lumenal. Residues 225-245 (EYALAIILMSVISIALTVYDL) traverse the membrane as a helical segment. Residues 246–401 (RQQSVKLHHL…NFKLYRDAIR (156 aa)) lie on the Cytoplasmic side of the membrane. Residues 402 to 422 (FLLCLVGTATIGMVYTLCVYV) form a helical membrane-spanning segment. Residues 423-437 (LSGEPPEEVVRKALD) lie on the Lumenal side of the membrane. Residues 438-458 (VITIAVPPALPAALTTGIIYA) form a helical membrane-spanning segment. Topologically, residues 459-901 (QRRLKKKGIF…KEGRAALVTS (443 aa)) are cytoplasmic. The 4-aspartylphosphate intermediate role is filled by Asp-487. Residues Asp-849 and Asp-853 each coordinate Mg(2+). Residues 902–922 (FCMFKYMALYSMIQYVGVLLL) traverse the membrane as a helical segment. Residues 923–933 (YWKTNSLSNYQ) lie on the Lumenal side of the membrane. The chain crosses the membrane as a helical span at residues 934-954 (FLFQDLAITTLIGVTMNLNGA). Topologically, residues 955–973 (NPKLVPFRPAGRLISPPLL) are cytoplasmic. A helical membrane pass occupies residues 974-994 (LSVVLNILLSLAMHIVGFILV). The Lumenal segment spans residues 995 to 1036 (QKQPWYIMDYHSVCPVRNESASALAASPSVPEKTRSNSTFAS). The chain crosses the membrane as a helical span at residues 1037–1057 (FENTTIWFLGTINCIFVALVF). Residues 1058 to 1071 (SKGKPFRQPTYTNY) lie on the Cytoplasmic side of the membrane. The chain crosses the membrane as a helical span at residues 1072–1092 (IFVLVLILQMGVCLFILFADI). At 1093 to 1105 (PEMHRRLDLLCTP) the chain is on the lumenal side. A helical transmembrane segment spans residues 1106 to 1126 (VLWRVYILIMISSNFVVSLAV). The Cytoplasmic segment spans residues 1127–1193 (EKAIIENRAL…PVFESNEEQL (67 aa)).

It belongs to the cation transport ATPase (P-type) (TC 3.A.3) family. Type V subfamily. Expressed in brain and stomach.

It is found in the early endosome membrane. The protein localises to the late endosome membrane. Its subcellular location is the recycling endosome membrane. The catalysed reaction is ATP + H2O = ADP + phosphate + H(+). This Mus musculus (Mouse) protein is Probable cation-transporting ATPase 13A4 (Atp13a4).